Consider the following 105-residue polypeptide: Cell division protein FtsL (105 aa).

At 1–22 the chain is on the cytoplasmic side; sequence MIGNERHGLVGVIGADLIRNAK. Residues 23–43 traverse the membrane as a helical segment; that stretch reads IPLILLVAVLISAVLVVTTAH. Topologically, residues 44–105 are periplasmic; that stretch reads RTRLLTAERE…DPSQENIVIK (62 aa).

The protein belongs to the FtsL family. As to quaternary structure, part of a complex composed of FtsB, FtsL and FtsQ.

The protein resides in the cell inner membrane. In terms of biological role, essential cell division protein. May link together the upstream cell division proteins, which are predominantly cytoplasmic, with the downstream cell division proteins, which are predominantly periplasmic. This is Cell division protein FtsL from Yersinia pestis.